Here is a 189-residue protein sequence, read N- to C-terminus: Small ribosomal subunit protein uS5 (189 aa).

Residues 22-85 enclose the S5 DRBM domain; that stretch reads FVDKLVAINR…EAAKRELIFV (64 aa).

The protein belongs to the universal ribosomal protein uS5 family. Part of the 30S ribosomal subunit. Contacts proteins S4 and S8.

With S4 and S12 plays an important role in translational accuracy. Functionally, located at the back of the 30S subunit body where it stabilizes the conformation of the head with respect to the body. The polypeptide is Small ribosomal subunit protein uS5 (Rhizobium johnstonii (strain DSM 114642 / LMG 32736 / 3841) (Rhizobium leguminosarum bv. viciae)).